The following is a 192-amino-acid chain: Endoribonuclease YbeY (192 aa).

Residues His109, His113, and His119 each coordinate Zn(2+). A disordered region spans residues 142–192 (VGAALREGGPARAAETETSWTRSPTSTSTRSPSGSTARGTRARSSRAGSGR). Positions 159–180 (TSWTRSPTSTSTRSPSGSTARG) are enriched in low complexity.

The protein belongs to the endoribonuclease YbeY family. Zn(2+) is required as a cofactor.

The protein localises to the cytoplasm. In terms of biological role, single strand-specific metallo-endoribonuclease involved in late-stage 70S ribosome quality control and in maturation of the 3' terminus of the 16S rRNA. The chain is Endoribonuclease YbeY from Anaeromyxobacter sp. (strain Fw109-5).